Here is a 67-residue protein sequence, read N- to C-terminus: Large ribosomal subunit protein bL31 (67 aa).

Zn(2+)-binding residues include Cys16, Cys18, Cys38, and Cys41.

It belongs to the bacterial ribosomal protein bL31 family. Type A subfamily. Part of the 50S ribosomal subunit. Requires Zn(2+) as cofactor.

In terms of biological role, binds the 23S rRNA. The polypeptide is Large ribosomal subunit protein bL31 (Thioalkalivibrio sulfidiphilus (strain HL-EbGR7)).